Here is a 371-residue protein sequence, read N- to C-terminus: Opsin, ultraviolet-sensitive (371 aa).

The Extracellular portion of the chain corresponds to 1 to 52; that stretch reads MSNDSIHWEARYLPAGPPRLLGWNVPAEELIHIPEHWLVYPEPNPSLHYLLA. N-linked (GlcNAc...) asparagine glycosylation occurs at Asn3. A helical membrane pass occupies residues 53–73; it reads LLYILFTFLALLGNGLVIWIF. Residues 74–84 lie on the Cytoplasmic side of the membrane; it reads CAAKSLRTPSN. A helical membrane pass occupies residues 85–105; the sequence is MFVVNLAICDFFMMIKTPIFI. At 106 to 121 the chain is on the extracellular side; that stretch reads YNSFNTGFALGNLGCQ. Cys120 and Cys197 form a disulfide bridge. A helical membrane pass occupies residues 122–142; sequence IFAVIGSLTGIGAAITNAAIA. At 143–161 the chain is on the cytoplasmic side; sequence YDRYSTIARPLDGKLSRGQ. A helical transmembrane segment spans residues 162–182; that stretch reads VILFIVLIWTYTIPWALMPVM. At 183-209 the chain is on the extracellular side; the sequence is GVWGRFVPEGFLTSCSFDYLTDTNEIR. A helical membrane pass occupies residues 210–230; that stretch reads IFVATIFTFSYCIPMILIIYY. The Cytoplasmic segment spans residues 231–278; sequence YSQIVSHVVNHEKALREQAKKMNVDSLRSNANTSSQSAEIRIAKAAIT. Residues 279–299 traverse the membrane as a helical segment; that stretch reads ICFLYVLSWTPYGVMSMIGAF. Residues 300–302 lie on the Extracellular side of the membrane; the sequence is GNK. A helical transmembrane segment spans residues 303–323; sequence ALLTPGVTMIPACTCKAVACL. Lys318 is subject to N6-(retinylidene)lysine. The Cytoplasmic segment spans residues 324 to 371; it reads DPYVYAISHPKYRLELQKRLPWLELQEKPISDSTSTTTETVNTPPASS.

It belongs to the G-protein coupled receptor 1 family. Opsin subfamily. Post-translationally, phosphorylated on some or all of the serine and threonine residues present in the C-terminal region. In terms of tissue distribution, expressed in the dorsal region of the retina.

The protein localises to the membrane. Visual pigments are the light-absorbing molecules that mediate vision. They consist of an apoprotein, opsin, covalently linked to 11-cis-retinal. The chain is Opsin, ultraviolet-sensitive (UVOP) from Apis mellifera (Honeybee).